The sequence spans 458 residues: Cobyrinate a,c-diamide synthase (458 aa).

Positions 254–445 (KIGVIRDQVF…IHVHFLSDKS (192 aa)) constitute a GATase cobBQ-type domain. Cys-335 functions as the Nucleophile in the catalytic mechanism.

The protein belongs to the CobB/CbiA family. Mg(2+) is required as a cofactor.

It carries out the reaction cob(II)yrinate + 2 L-glutamine + 2 ATP + 2 H2O = cob(II)yrinate a,c diamide + 2 L-glutamate + 2 ADP + 2 phosphate + 2 H(+). It participates in cofactor biosynthesis; adenosylcobalamin biosynthesis; cob(II)yrinate a,c-diamide from sirohydrochlorin (anaerobic route): step 10/10. Its function is as follows. Catalyzes the ATP-dependent amidation of the two carboxylate groups at positions a and c of cobyrinate, using either L-glutamine or ammonia as the nitrogen source. This is Cobyrinate a,c-diamide synthase from Archaeoglobus fulgidus (strain ATCC 49558 / DSM 4304 / JCM 9628 / NBRC 100126 / VC-16).